The sequence spans 656 residues: Threonine--tRNA ligase (656 aa).

Positions 2–67 (LMSQITIILP…KDQTKVALVT (66 aa)) constitute a TGS domain. Positions 251-542 (DHRKLGKELG…YLEHTAGHLP (292 aa)) are catalytic. The Zn(2+) site is built by Cys-342, His-393, and His-519.

This sequence belongs to the class-II aminoacyl-tRNA synthetase family. As to quaternary structure, homodimer. Zn(2+) serves as cofactor.

It localises to the cytoplasm. The catalysed reaction is tRNA(Thr) + L-threonine + ATP = L-threonyl-tRNA(Thr) + AMP + diphosphate + H(+). In terms of biological role, catalyzes the attachment of threonine to tRNA(Thr) in a two-step reaction: L-threonine is first activated by ATP to form Thr-AMP and then transferred to the acceptor end of tRNA(Thr). Also edits incorrectly charged L-seryl-tRNA(Thr). The protein is Threonine--tRNA ligase of Bdellovibrio bacteriovorus (strain ATCC 15356 / DSM 50701 / NCIMB 9529 / HD100).